A 1262-amino-acid chain; its full sequence is Unconventional myosin-VI (1262 aa).

Positions 2 to 53 constitute a Myosin N-terminal SH3-like domain; it reads EDGKPVWAPHPTDGFQMGNIVDIGPDSLTIEPLNQKGKTFLALINQVFPAEE. The 715-residue stretch at 57-771 folds into the Myosin motor domain; that stretch reads KDVEDNCSLM…KFAEFDQIMK (715 aa). 151 to 158 is a binding site for ATP; sequence GESGAGKT. Position 267 is a phosphoserine (Ser-267). A responsible for slow ATPase activity region spans residues 273–317; that stretch reads YLNRGCTRFFANKETDKQILQNRKSPEYVKAGSLKDPLLDDHGDF. Residue Thr-405 is modified to Phosphothreonine. Ser-604 is modified (phosphoserine). 2 actin-binding regions span residues 651–673 and 665–672; these read LNLLLDKLRSTGASFIRCIKPNL and FIRCIKPN. The tract at residues 782–810 is required for binding calmodulin; sequence KRVNLWLVCSRWKKVQWCSLSVIKLKNKI. The 21-residue stretch at 814–834 folds into the IQ domain; it reads AEACIKMQKTIRMWLCKRRHK. The segment at 835 to 916 is three-helix bundle; that stretch reads PRIDGLVKVG…EDLLSALQKK (82 aa). The stretch at 864–984 forms a coiled coil; the sequence is KPEVNRQIKN…EDDEKRIQAE (121 aa). The segment at 917–984 is SAH; it reads KQQEEEAERL…EDDEKRIQAE (68 aa). Residues 933 to 955 form a disordered region; sequence MEKERKRREEDEERRRKEEEERR. The residue at position 1025 (Ser-1025) is a Phosphoserine. Residues 1034–1253 are interaction with TAX1BP1 and CALCOCO2/NDP52; it reads LRRGPAVQAT…ESRQARPTYA (220 aa). Residues 1084–1086 are interaction with OPTN; the sequence is RRL. Ser-1123 bears the Phosphoserine mark. An interaction with TOM1 region spans residues 1125–1253; it reads QQNPAAQLPA…ESRQARPTYA (129 aa).

The protein belongs to the TRAFAC class myosin-kinesin ATPase superfamily. Myosin family. In terms of assembly, homodimer; dimerization seems to implicate the unfolding of the three-helix bundle region creating an additional calmodulin binding site, and cargo binding. Able to function as a monomer under specific conditions in vitro. Forms a complex with CFTR and DAB2 in the apical membrane of epithelial cells. Component of the DISP/DOCK7-induced septin displacement complex, at least composed of DOCK7, LRCH3 and MYO6. Binding to calmodulin through a unique insert, not found in other myosins, located in the neck region between the motor domain and the IQ domain appears to contribute to the directionality reversal. This interaction occurs only if the C-terminal lobe of calmodulin is occupied by calcium. Interaction with F-actin/ACTN1 occurs only at the apical brush border domain of the proximal tubule cells. Interacts with DAB2. In vitro, the C-terminal globular tail binds a C-terminal region of DAB2. Interacts with CFTR. Interacts with CABP5. Interacts (via residues 1128-1256) with TOM1 (via residues 392-463). Interacts (via residues 1060-1285) with OPTN. Interacts (via residues 1060-1285) with TAX1BP1 and CALCOCO2/NDP52. Interacts with TOM1L2. Interacts with CLIC5; may work together in a complex which also includes RDX and MYO6 to stabilize linkages between the plasma membrane and subjacent actin cytoskeleton at the base of stereocilia. Phosphorylation in the motor domain, induced by EGF, results in translocation of MYO6 from the cell surface to membrane ruffles and affects F-actin dynamics. Phosphorylated in vitro by p21-activated kinase (PAK). In terms of tissue distribution, within the cochlea, expressed specifically within the sensory hair cells (at protein level). Expressed in the inner and outer plexiform layer of the retina (at protein level). Widely expressed. Expressed in the brain, kidney, liver, and testis.

The protein localises to the golgi apparatus. It is found in the trans-Golgi network membrane. The protein resides in the nucleus. Its subcellular location is the cytoplasm. It localises to the perinuclear region. The protein localises to the membrane. It is found in the clathrin-coated pit. The protein resides in the cytoplasmic vesicle. Its subcellular location is the clathrin-coated vesicle. It localises to the cell projection. The protein localises to the filopodium. It is found in the ruffle membrane. The protein resides in the microvillus. Its subcellular location is the cytosol. Functionally, myosins are actin-based motor molecules with ATPase activity. Unconventional myosins serve in intracellular movements. Myosin 6 is a reverse-direction motor protein that moves towards the minus-end of actin filaments. Has slow rate of actin-activated ADP release due to weak ATP binding. Functions in a variety of intracellular processes such as vesicular membrane trafficking and cell migration. Required for the structural integrity of the Golgi apparatus via the p53-dependent pro-survival pathway. Appears to be involved in a very early step of clathrin-mediated endocytosis in polarized epithelial cells. Together with TOM1, mediates delivery of endocytic cargo to autophagosomes thereby promoting autophagosome maturation and driving fusion with lysosomes. Links TOM1 with autophagy receptors, such as TAX1BP1; CALCOCO2/NDP52 and OPTN. May act as a regulator of F-actin dynamics. As part of the DISP complex, may regulate the association of septins with actin and thereby regulate the actin cytoskeleton. May play a role in transporting DAB2 from the plasma membrane to specific cellular targets. May play a role in the extension and network organization of neurites. Required for structural integrity of inner ear hair cells. Required for the correct localization of CLIC5 and RDX at the stereocilium base. Modulates RNA polymerase II-dependent transcription. This chain is Unconventional myosin-VI (Myo6), found in Mus musculus (Mouse).